A 168-amino-acid polypeptide reads, in one-letter code: Crossover junction endodeoxyribonuclease RuvC (168 aa).

Residues aspartate 7, glutamate 66, and aspartate 138 contribute to the active site. Mg(2+) contacts are provided by aspartate 7, glutamate 66, and aspartate 138.

Belongs to the RuvC family. Homodimer which binds Holliday junction (HJ) DNA. The HJ becomes 2-fold symmetrical on binding to RuvC with unstacked arms; it has a different conformation from HJ DNA in complex with RuvA. In the full resolvosome a probable DNA-RuvA(4)-RuvB(12)-RuvC(2) complex forms which resolves the HJ. The cofactor is Mg(2+).

The protein resides in the cytoplasm. The enzyme catalyses Endonucleolytic cleavage at a junction such as a reciprocal single-stranded crossover between two homologous DNA duplexes (Holliday junction).. Functionally, the RuvA-RuvB-RuvC complex processes Holliday junction (HJ) DNA during genetic recombination and DNA repair. Endonuclease that resolves HJ intermediates. Cleaves cruciform DNA by making single-stranded nicks across the HJ at symmetrical positions within the homologous arms, yielding a 5'-phosphate and a 3'-hydroxyl group; requires a central core of homology in the junction. The consensus cleavage sequence is 5'-(A/T)TT(C/G)-3'. Cleavage occurs on the 3'-side of the TT dinucleotide at the point of strand exchange. HJ branch migration catalyzed by RuvA-RuvB allows RuvC to scan DNA until it finds its consensus sequence, where it cleaves and resolves the cruciform DNA. This is Crossover junction endodeoxyribonuclease RuvC from Cereibacter sphaeroides (strain ATCC 17029 / ATH 2.4.9) (Rhodobacter sphaeroides).